Consider the following 494-residue polypeptide: Tripartite motif-containing protein 5 (494 aa).

Ala-2 carries the N-acetylalanine modification. Residues 15–59 (CPICLELLTEPLSLDCGHSFCQACITANHKKSMLHQGERSCPLCR) form an RING-type zinc finger. At Ser-86 the chain carries Phosphoserine. The segment at 91–132 (QKVDHCARHGEKLLLFCQQDGNVICWLCERSQEHRGHHTLLV) adopts a B box-type zinc-finger fold. The Zn(2+) site is built by Cys-96, His-99, Cys-118, and His-124. Residues 132 to 222 (VEEVAQTYRE…KRLTQSENDM (91 aa)) adopt a coiled-coil conformation. The segment at 186 to 199 (FKQLRDILDCEESN) is required for interaction with GABARAP and for autophagy. One can recognise a B30.2/SPRY domain in the interval 280–494 (PDLKGMLQVF…LPMTLCSPRS (215 aa)).

Belongs to the TRIM/RBCC family. As to quaternary structure, can form homodimers and homotrimers. In addition to lower-order dimerization, also exhibits a higher-order multimerization and both low- and high-order multimerizations are essential for its restriction activity. Interacts with BTBD1 and BTBD2. Interacts with PSMC4, PSMC5, PSMD7 and HSPA8/HSC70. Interacts (via B30.2/SPRY domain) with HSPA1A/B. Interacts with PSMC2, MAP3K7/TAK1, TAB2 and TAB3. Interacts with SQSTM1. Interacts with TRIM6 and TRIM34. Interacts with ULK1 (phosphorylated form), GABARAP, GABARAPL1, GABARAPL2, MAP1LC3A, MAP1LC3C and BECN1. Degraded in a proteasome-independent fashion in the absence of viral infection but in a proteasome-dependent fashion following exposure to restriction sensitive virus. Post-translationally, autoubiquitinated in a RING finger- and UBE2D2-dependent manner. Monoubiquitinated by TRIM21. Deubiquitinated by Yersinia YopJ. Ubiquitination may not lead to proteasomal degradation.

It localises to the cytoplasm. The protein resides in the nucleus. The enzyme catalyses S-ubiquitinyl-[E2 ubiquitin-conjugating enzyme]-L-cysteine + [acceptor protein]-L-lysine = [E2 ubiquitin-conjugating enzyme]-L-cysteine + N(6)-ubiquitinyl-[acceptor protein]-L-lysine.. Its pathway is protein modification; protein ubiquitination. Functionally, capsid-specific restriction factor that prevents infection from non-host-adapted retroviruses. Blocks viral replication early in the life cycle, after viral entry but before reverse transcription. In addition to acting as a capsid-specific restriction factor, also acts as a pattern recognition receptor that activates innate immune signaling in response to the retroviral capsid lattice. Binding to the viral capsid triggers its E3 ubiquitin ligase activity, and in concert with the heterodimeric ubiquitin conjugating enzyme complex UBE2V1-UBE2N (also known as UBC13-UEV1A complex) generates 'Lys-63'-linked polyubiquitin chains, which in turn are catalysts in the autophosphorylation of the MAP3K7/TAK1 complex (includes TAK1, TAB2, and TAB3). Activation of the MAP3K7/TAK1 complex by autophosphorylation results in the induction and expression of NF-kappa-B and MAPK-responsive inflammatory genes, thereby leading to an innate immune response in the infected cell. Plays a role in regulating autophagy through activation of autophagy regulator BECN1 by causing its dissociation from its inhibitors BCL2 and TAB2. This Pithecia pithecia (White-faced saki) protein is Tripartite motif-containing protein 5 (TRIM5).